The chain runs to 732 residues: 1,4-alpha-glucan branching enzyme GlgB 1 (732 aa).

Catalysis depends on aspartate 411, which acts as the Nucleophile. Glutamate 464 acts as the Proton donor in catalysis.

Belongs to the glycosyl hydrolase 13 family. GlgB subfamily. Monomer.

The enzyme catalyses Transfers a segment of a (1-&gt;4)-alpha-D-glucan chain to a primary hydroxy group in a similar glucan chain.. The protein operates within glycan biosynthesis; glycogen biosynthesis. Its function is as follows. Catalyzes the formation of the alpha-1,6-glucosidic linkages in glycogen by scission of a 1,4-alpha-linked oligosaccharide from growing alpha-1,4-glucan chains and the subsequent attachment of the oligosaccharide to the alpha-1,6 position. The polypeptide is 1,4-alpha-glucan branching enzyme GlgB 1 (Xanthomonas euvesicatoria pv. vesicatoria (strain 85-10) (Xanthomonas campestris pv. vesicatoria)).